The sequence spans 153 residues: ORM1-like protein 2 (153 aa).

Over 1–21 (MNVGVAHSEVNPNTRVMNSRG) the chain is Cytoplasmic. 2 helical membrane-spanning segments follow: residues 22–42 (IWLA…SIPF) and 43–63 (FSIP…MYIF). At 64 to 105 (LHTVKGTPFETPDQGKARLLTHWEQMDYGLQFTSSRKFLSIS) the chain is on the cytoplasmic side. A helical transmembrane segment spans residues 106-126 (PIVLYLLASFYTKYDAAHFLI). Topologically, residues 127–153 (NTASLLSVLLPKLPQFHGVRLFGINKY) are extracellular.

It belongs to the ORM family. As to quaternary structure, ceramide-sensitive subunit of the serine palmitoyltransferase (SPT) complex, which is also composed of SPTLC1, SPTLC2/3 and SPTSSA/B.

It localises to the endoplasmic reticulum membrane. Functionally, plays an essential role in the homeostatic regulation of sphingolipid de novo biosynthesis by modulating the activity of the serine palmitoyltransferase (SPT) in response to ceramide levels. When complexed to SPT, the binding of ceramides to its N-terminus stabilizes a conformation that block SPT substrate entry, hence preventing SPT catalytic activity. Through this mechanism, maintains ceramide levels at sufficient concentrations for the production of complex sphingolipids, but which prevents the accumulation of ceramides to levels that trigger apoptosis. The sequence is that of ORM1-like protein 2 (Ormdl2) from Mus musculus (Mouse).